The chain runs to 551 residues: MMDLEHKRISRSTLPDYADPDYFEARGERNPVKPQSSNVVPGTSHIGSIKSPADYVFGDIIGDGSFSKVRRATDKKSWKEYAIKVLDKKYIVKENKVKYVNIERDSMMRLNGFPGISRLFHTFQDDLKLYYVLELAPNGELLQYIKKYRFLDENCVRFYAAEILSSIEYMHSCGIIHRDLKPENILFDGNMHVKITDFGTAKILPPKYVNSPDYTTFPSSFVGTAEYVAPELLSRQVVSKSSDLWAFACVVYQMIVGSPPFHGSNPNNIFKKIMSLEYELPKLLPPDIVPLFSHLFRIQPSDRSTTQQIKQFPFFATITWDNLWTQDPPPMQSFRPNYNIAIPNAPAYYRSNVTAAAAANAAAAFASASIVKHQETARRQELPTVNRFTAPTAHYGYASLRSHQMPVDRLYYKLVPSSESIIESTSVFVSPIPSVPEGNKFPSGLSKMFLKRKQRVMLLTDVGRCAFVCKGKHERLFIEMEVNLKDSSVVVIFDENSSKRFLIEDKVQSWIIEDSSGDVTKYKDKILKFADVASSHQSRSSEENVEENEEE.

Positions 24–43 (EARGERNPVKPQSSNVVPGT) are disordered. Residues 55-315 (YVFGDIIGDG…TQQIKQFPFF (261 aa)) enclose the Protein kinase domain. ATP-binding positions include 65–67 (SFS) and K84. The interval 86 to 131 (LDKKYIVKENKVKYVNIERDSMMRLNGFPGISRLFHTFQDDLKLYY) is PIF-pocket. ATP is bound by residues 134-136 (ELA) and E140. The active-site Proton acceptor is the D179. ATP is bound by residues E183 and D197. S220 carries the post-translational modification Phosphoserine; by autocatalysis. A Phosphoserine modification is found at S538.

Belongs to the protein kinase superfamily. AGC Ser/Thr protein kinase family. PDPK1 subfamily.

The protein localises to the cytoplasm. It is found in the nucleus. Its subcellular location is the cytoskeleton. It localises to the microtubule organizing center. The protein resides in the spindle pole body. It carries out the reaction L-seryl-[protein] + ATP = O-phospho-L-seryl-[protein] + ADP + H(+). It catalyses the reaction L-threonyl-[protein] + ATP = O-phospho-L-threonyl-[protein] + ADP + H(+). This chain is Serine/threonine-protein kinase ppk21 (ppk21), found in Schizosaccharomyces pombe (strain 972 / ATCC 24843) (Fission yeast).